Reading from the N-terminus, the 220-residue chain is UPF0758 protein Asuc_0013 (220 aa).

The region spanning 98–220 (EFTNPLTVRL…YFSFAEQDWL (123 aa)) is the MPN domain. 3 residues coordinate Zn(2+): H169, H171, and D182. The JAMM motif motif lies at 169–182 (HNHPSGSAEPSASD).

Belongs to the UPF0758 family.

The polypeptide is UPF0758 protein Asuc_0013 (Actinobacillus succinogenes (strain ATCC 55618 / DSM 22257 / CCUG 43843 / 130Z)).